A 371-amino-acid polypeptide reads, in one-letter code: ETS-related transcription factor Elf-3 (371 aa).

One can recognise a PNT domain in the interval 46-132 (NPQMSLEGTE…AQLRDLTSSS (87 aa)). The 9aaTAD motif lies at 137-145 (SWIIELLEK). Positions 173 to 251 (GQQASPYHPG…HGKRKRGRPR (79 aa)) are disordered. The span at 181–216 (PGSCGAGAPSPGSSDVSTAGTGASRSSHSSDSGGSD) shows a compositional bias: low complexity. Residues 231-241 (GFRDCKKGDPK) are compositionally biased toward basic and acidic residues. Residues 242 to 251 (HGKRKRGRPR) are compositionally biased toward basic residues. The ETS DNA-binding region spans 273–355 (THLWEFIRDI…DGRRLVYKFG (83 aa)).

The protein belongs to the ETS family. Interacts with TBP. Interacts with CREBBP and EP300; these act as transcriptional coactivators of ELF3 and positively modulate its function. Interacts with XRCC5/KU86 and XRCC6/KU70; these inhibit the ability of ELF3 to bind DNA and negatively modulate its transcriptional activity. Associated with CLND7 and POU2F3. Interacts with ZNF768. Expressed exclusively in tissues containing a high content of terminally differentiated epithelial cells including mammary gland, colon, trachea, kidney, prostate, uterus, stomach and skin.

The protein localises to the cytoplasm. The protein resides in the nucleus. Its function is as follows. Transcriptional activator that binds and transactivates ETS sequences containing the consensus nucleotide core sequence GGA[AT]. Acts synergistically with POU2F3 to transactivate the SPRR2A promoter and with RUNX1 to transactivate the ANGPT1 promoter. Also transactivates collagenase, CCL20, CLND7, FLG, KRT8, NOS2, PTGS2, SPRR2B, TGFBR2 and TGM3 promoters. Represses KRT4 promoter activity. Involved in mediating vascular inflammation. May play an important role in epithelial cell differentiation and tumorigenesis. May be a critical downstream effector of the ERBB2 signaling pathway. May be associated with mammary gland development and involution. Plays an important role in the regulation of transcription with TATA-less promoters in preimplantation embryos, which is essential in preimplantation development. This Homo sapiens (Human) protein is ETS-related transcription factor Elf-3.